We begin with the raw amino-acid sequence, 517 residues long: T-box transcription factor TBX5 (517 aa).

The interval 1–46 is disordered; the sequence is MADADEGFGLARTPLEPDSKDRSCDSKPESALGAPSKSPSSPQAAF. A compositionally biased stretch (basic and acidic residues) spans 15 to 28; it reads LEPDSKDRSCDSKP. Over residues 34–45 the composition is skewed to low complexity; sequence APSKSPSSPQAA. The segment at residues 58 to 238 is a DNA-binding region (T-box); the sequence is LHERELWLKF…NNPFAKGFRG (181 aa). 2 disordered regions span residues 270 to 313 and 331 to 369; these read HSPF…YPLA and SSTEHPYKKPYMETSPSEEDTFYRSGYPQQQGLSTSYRT. Positions 271–300 are enriched in polar residues; the sequence is SPFSSETRALSTSSNLGSQYQCENGVSGPS. The residue at position 338 (K338) is an N6-acetyllysine. Residues 357–369 show a composition bias toward polar residues; it reads YPQQQGLSTSYRT.

In terms of assembly, monomer. Homodimer (via the T-box); binds DNA as homodimer. Interacts (via the T-box) with NKX2-5 (via the homeobox); this complex binds DNA. Interacts with GATA4. Interacts with KAT2A and KAT2B. In terms of processing, acetylation at Lys-338 by KAT2A and KAT2B promotes nuclear retention.

The protein resides in the nucleus. The protein localises to the cytoplasm. DNA-binding protein that regulates the transcription of several genes and is involved in heart development and limb pattern formation. Binds to the core DNA motif of NPPA promoter. The protein is T-box transcription factor TBX5 (Tbx5) of Rattus norvegicus (Rat).